We begin with the raw amino-acid sequence, 445 residues long: Exodeoxyribonuclease 7 large subunit (445 aa).

It belongs to the XseA family. In terms of assembly, heterooligomer composed of large and small subunits.

The protein localises to the cytoplasm. It carries out the reaction Exonucleolytic cleavage in either 5'- to 3'- or 3'- to 5'-direction to yield nucleoside 5'-phosphates.. In terms of biological role, bidirectionally degrades single-stranded DNA into large acid-insoluble oligonucleotides, which are then degraded further into small acid-soluble oligonucleotides. The protein is Exodeoxyribonuclease 7 large subunit of Shewanella oneidensis (strain ATCC 700550 / JCM 31522 / CIP 106686 / LMG 19005 / NCIMB 14063 / MR-1).